The following is a 344-amino-acid chain: L-rhamnose-proton symporter (344 aa).

The next 10 membrane-spanning stretches (helical) occupy residues 4–24 (AITM…CFYA), 38–58 (WSVG…ALLL), 68–88 (FSLS…IGNI), 101–121 (MGIG…TPII), 137–157 (TLLG…AGQL), 175–195 (LVLA…MNAA), 214–234 (LPSY…FCFI), 259–279 (VLLS…YAWG), 290–310 (ISWM…GLVL), and 323–343 (VLSL…IGMA).

The protein belongs to the L-rhamnose transporter (TC 2.A.7.6) family.

It localises to the cell inner membrane. The catalysed reaction is L-rhamnopyranose(in) + H(+)(in) = L-rhamnopyranose(out) + H(+)(out). Uptake of L-rhamnose across the cytoplasmic membrane with the concomitant transport of protons into the cell (symport system). This chain is L-rhamnose-proton symporter, found in Escherichia coli O1:K1 / APEC.